Reading from the N-terminus, the 347-residue chain is Holliday junction branch migration complex subunit RuvB (347 aa).

Residues 1-186 (MKDENSINFL…FGITARFELY (186 aa)) form a large ATPase domain (RuvB-L) region. ATP contacts are provided by residues Leu25, Arg26, Gly67, Lys70, Thr71, Thr72, 133–135 (EDY), Arg176, Tyr186, and Arg223. Residue Thr71 participates in Mg(2+) binding. The segment at 187-257 (SEIELVEIIK…IVSIGLEMLR (71 aa)) is small ATPAse domain (RuvB-S). Residues 260 to 347 (GEGLDEQDRN…DISENQRVSF (88 aa)) form a head domain (RuvB-H) region. DNA-binding residues include Arg315 and Arg320.

This sequence belongs to the RuvB family. Homohexamer. Forms an RuvA(8)-RuvB(12)-Holliday junction (HJ) complex. HJ DNA is sandwiched between 2 RuvA tetramers; dsDNA enters through RuvA and exits via RuvB. An RuvB hexamer assembles on each DNA strand where it exits the tetramer. Each RuvB hexamer is contacted by two RuvA subunits (via domain III) on 2 adjacent RuvB subunits; this complex drives branch migration. In the full resolvosome a probable DNA-RuvA(4)-RuvB(12)-RuvC(2) complex forms which resolves the HJ.

It is found in the cytoplasm. The enzyme catalyses ATP + H2O = ADP + phosphate + H(+). In terms of biological role, the RuvA-RuvB-RuvC complex processes Holliday junction (HJ) DNA during genetic recombination and DNA repair, while the RuvA-RuvB complex plays an important role in the rescue of blocked DNA replication forks via replication fork reversal (RFR). RuvA specifically binds to HJ cruciform DNA, conferring on it an open structure. The RuvB hexamer acts as an ATP-dependent pump, pulling dsDNA into and through the RuvAB complex. RuvB forms 2 homohexamers on either side of HJ DNA bound by 1 or 2 RuvA tetramers; 4 subunits per hexamer contact DNA at a time. Coordinated motions by a converter formed by DNA-disengaged RuvB subunits stimulates ATP hydrolysis and nucleotide exchange. Immobilization of the converter enables RuvB to convert the ATP-contained energy into a lever motion, pulling 2 nucleotides of DNA out of the RuvA tetramer per ATP hydrolyzed, thus driving DNA branch migration. The RuvB motors rotate together with the DNA substrate, which together with the progressing nucleotide cycle form the mechanistic basis for DNA recombination by continuous HJ branch migration. Branch migration allows RuvC to scan DNA until it finds its consensus sequence, where it cleaves and resolves cruciform DNA. The sequence is that of Holliday junction branch migration complex subunit RuvB from Borrelia garinii subsp. bavariensis (strain ATCC BAA-2496 / DSM 23469 / PBi) (Borreliella bavariensis).